A 176-amino-acid polypeptide reads, in one-letter code: NAD(P)H-quinone oxidoreductase subunit I, chloroplastic (176 aa).

4Fe-4S ferredoxin-type domains lie at 55–84 and 95–124; these read GRIH…VNWE and QTYS…MTEE. Residues Cys64, Cys67, Cys70, Cys74, Cys104, Cys107, Cys110, and Cys114 each coordinate [4Fe-4S] cluster.

The protein belongs to the complex I 23 kDa subunit family. NDH is composed of at least 16 different subunits, 5 of which are encoded in the nucleus. Requires [4Fe-4S] cluster as cofactor.

It is found in the plastid. Its subcellular location is the chloroplast thylakoid membrane. The catalysed reaction is a plastoquinone + NADH + (n+1) H(+)(in) = a plastoquinol + NAD(+) + n H(+)(out). The enzyme catalyses a plastoquinone + NADPH + (n+1) H(+)(in) = a plastoquinol + NADP(+) + n H(+)(out). Functionally, NDH shuttles electrons from NAD(P)H:plastoquinone, via FMN and iron-sulfur (Fe-S) centers, to quinones in the photosynthetic chain and possibly in a chloroplast respiratory chain. The immediate electron acceptor for the enzyme in this species is believed to be plastoquinone. Couples the redox reaction to proton translocation, and thus conserves the redox energy in a proton gradient. This chain is NAD(P)H-quinone oxidoreductase subunit I, chloroplastic, found in Mesostigma viride (Green alga).